We begin with the raw amino-acid sequence, 634 residues long: RING finger protein 207 (634 aa).

The RING-type zinc-finger motif lies at 25 to 64 (CPLCHVQYERPCLLDCFHDFCAGCLRGRATDGRLTCPLCQ). The B box-type; atypical zinc finger occupies 93-145 (VEAVRCANCDLECSEQDVETTYFCNTCGQPLCARCRDETHRARMFARHDIVAL). Zn(2+)-binding residues include Cys-98, Cys-101, Cys-127, and His-132. Coiled-coil stretches lie at residues 422-457 (EHCR…KHHS) and 494-518 (EIWE…HDLL). The disordered stretch occupies residues 552 to 634 (FQAPVDEQSE…DVPTWREHPT (83 aa)).

As to quaternary structure, interacts with the core-glycosylated, but not the fully glycosylated form of KCNH2/HERG. Interacts with DNAJA1 and HSPA8. Interacts (via the C-terminus) with HSPA1A; this interaction additively increases KCNH2 expression.

The protein localises to the cytoplasm. Its function is as follows. Plays a role in cardiac repolarization possibly by stabilizing membrane expression of the potassium channel KCNH2/HERG, or by assisting its synthesis, folding or export from the endoplasmic reticulum, in a heat shock protein-dependent manner. The chain is RING finger protein 207 (RNF207) from Homo sapiens (Human).